A 118-amino-acid chain; its full sequence is Large ribosomal subunit protein bL20 (118 aa).

It belongs to the bacterial ribosomal protein bL20 family.

Functionally, binds directly to 23S ribosomal RNA and is necessary for the in vitro assembly process of the 50S ribosomal subunit. It is not involved in the protein synthesizing functions of that subunit. In Gluconobacter oxydans (strain 621H) (Gluconobacter suboxydans), this protein is Large ribosomal subunit protein bL20.